Consider the following 427-residue polypeptide: Enolase (427 aa).

Residue glutamine 163 participates in (2R)-2-phosphoglycerate binding. The active-site Proton donor is glutamate 205. Residues aspartate 242, glutamate 285, and aspartate 312 each coordinate Mg(2+). 4 residues coordinate (2R)-2-phosphoglycerate: lysine 337, arginine 366, serine 367, and lysine 388. Lysine 337 serves as the catalytic Proton acceptor.

Belongs to the enolase family. It depends on Mg(2+) as a cofactor.

It is found in the cytoplasm. The protein localises to the secreted. Its subcellular location is the cell surface. The catalysed reaction is (2R)-2-phosphoglycerate = phosphoenolpyruvate + H2O. Its pathway is carbohydrate degradation; glycolysis; pyruvate from D-glyceraldehyde 3-phosphate: step 4/5. In terms of biological role, catalyzes the reversible conversion of 2-phosphoglycerate (2-PG) into phosphoenolpyruvate (PEP). It is essential for the degradation of carbohydrates via glycolysis. The polypeptide is Enolase (Bradyrhizobium sp. (strain BTAi1 / ATCC BAA-1182)).